Reading from the N-terminus, the 277-residue chain is MVRVGAHTSIAGGVYNAVEEQVEYSGNCGQIFSHSPQVWQDPNIDDDEAEQFRDLAADHGVGPWVIHSSYLVNLCTPKDDLREKSLDSMQKEVDAAAKLGIEYVNVHLGAHTGAGVDGGLDNAASVLDDLDIPEGVTVLVESDAGSGTKLGGQFEHLATVRERTDQDIEFCLDTAHMFAAGYDLSTPEAVDETLAEFDEVVGVEDLACVHLNDSKHECGTNKDEHAHIGEGHIGEDGMRAFVNHDAIRDVPLVLETPTENGKSFAWNIERVKELRGE.

Zn(2+)-binding residues include H67, H107, E141, D173, H176, H210, D223, H225, and E255.

It belongs to the AP endonuclease 2 family. The cofactor is Zn(2+).

It carries out the reaction Endonucleolytic cleavage to 5'-phosphooligonucleotide end-products.. Endonuclease IV plays a role in DNA repair. It cleaves phosphodiester bonds at apurinic or apyrimidinic (AP) sites, generating a 3'-hydroxyl group and a 5'-terminal sugar phosphate. The chain is Probable endonuclease 4 from Haloarcula marismortui (strain ATCC 43049 / DSM 3752 / JCM 8966 / VKM B-1809) (Halobacterium marismortui).